The primary structure comprises 209 residues: Large ribosomal subunit protein uL3 (209 aa).

Residues 113–155 (TSRGHGYQGNIKRHHQSRGPETHGSRYHRIPGSMGSIINRVPK) are disordered.

Belongs to the universal ribosomal protein uL3 family. In terms of assembly, part of the 50S ribosomal subunit. Forms a cluster with proteins L14 and L19.

Its function is as follows. One of the primary rRNA binding proteins, it binds directly near the 3'-end of the 23S rRNA, where it nucleates assembly of the 50S subunit. The sequence is that of Large ribosomal subunit protein uL3 from Lactobacillus delbrueckii subsp. bulgaricus (strain ATCC 11842 / DSM 20081 / BCRC 10696 / JCM 1002 / NBRC 13953 / NCIMB 11778 / NCTC 12712 / WDCM 00102 / Lb 14).